The following is a 333-amino-acid chain: GDP-fucose transporter 1 (333 aa).

8 consecutive transmembrane segments (helical) span residues 13 to 33 (SIKI…MVFL), 45 to 65 (APMF…FILG), 95 to 115 (LVFV…GVAF), 139 to 159 (TSMP…VGVN), 169 to 189 (MAGI…AIYI), 211 to 231 (AIFL…IAAS), 239 to 259 (YWFL…VSML), and 293 to 313 (TATW…YVLV).

The protein belongs to the TPT transporter family. SLC35C subfamily.

It localises to the golgi apparatus membrane. The catalysed reaction is GMP(out) + GDP-beta-L-fucose(in) = GMP(in) + GDP-beta-L-fucose(out). In terms of biological role, antiporter specific for GDP-l-fucose and depending on the concomitant reverse transport of GMP. Involved in GDP-fucose import from the cytoplasm into the Golgi lumen. In Monosiga brevicollis (Choanoflagellate), this protein is GDP-fucose transporter 1 (slc35c1).